We begin with the raw amino-acid sequence, 399 residues long: Enoyl-[acyl-carrier-protein] reductase [NADH] (399 aa).

Residues 48–53 (GASTGY), 74–75 (FE), 111–112 (DA), and 139–140 (LA) each bind NAD(+). Position 225 (Tyr225) interacts with substrate. Tyr235 (proton donor) is an active-site residue. NAD(+)-binding positions include Lys244 and 274–276 (VVT).

It belongs to the TER reductase family. As to quaternary structure, monomer.

The enzyme catalyses a 2,3-saturated acyl-[ACP] + NAD(+) = a (2E)-enoyl-[ACP] + NADH + H(+). Its pathway is lipid metabolism; fatty acid biosynthesis. Involved in the final reduction of the elongation cycle of fatty acid synthesis (FAS II). Catalyzes the reduction of a carbon-carbon double bond in an enoyl moiety that is covalently linked to an acyl carrier protein (ACP). The protein is Enoyl-[acyl-carrier-protein] reductase [NADH] of Erwinia tasmaniensis (strain DSM 17950 / CFBP 7177 / CIP 109463 / NCPPB 4357 / Et1/99).